A 185-amino-acid polypeptide reads, in one-letter code: Elongation factor P (185 aa).

The protein belongs to the elongation factor P family.

The protein localises to the cytoplasm. It functions in the pathway protein biosynthesis; polypeptide chain elongation. Involved in peptide bond synthesis. Stimulates efficient translation and peptide-bond synthesis on native or reconstituted 70S ribosomes in vitro. Probably functions indirectly by altering the affinity of the ribosome for aminoacyl-tRNA, thus increasing their reactivity as acceptors for peptidyl transferase. The sequence is that of Elongation factor P from Staphylococcus epidermidis (strain ATCC 35984 / DSM 28319 / BCRC 17069 / CCUG 31568 / BM 3577 / RP62A).